A 242-amino-acid polypeptide reads, in one-letter code: Large ribosomal subunit protein uL30y (242 aa).

It belongs to the universal ribosomal protein uL30 family.

This Arabidopsis thaliana (Mouse-ear cress) protein is Large ribosomal subunit protein uL30y (RPL7B).